Reading from the N-terminus, the 2636-residue chain is Ankyrin repeat and KH domain-containing protein CBG24701 (2636 aa).

ANK repeat units follow at residues 252 to 281, 286 to 317, 361 to 390, 435 to 464, 468 to 500, 505 to 534, 536 to 564, 566 to 595, 598 to 627, 632 to 661, and 665 to 695; these read SRIT…DPNA, NCNT…KVDV, NDNS…KNQQ, NLPS…RIDE, HKNT…DVNA, SGDT…DLTT, KITP…TIPQ, QLSR…DLNF, DERT…SVNF, NDAT…DPML, and DGVN…NMDL. Disordered stretches follow at residues 994-1030, 1172-1191, and 1230-1268; these read PIDA…TTIE, KSNR…KKGK, and NNTQ…VIDK. The span at 1006–1030 shows a compositional bias: polar residues; it reads QQTGPKTTSLTTPQPDESNGATTIE. The segment covering 1233 to 1245 has biased composition (low complexity); it reads QVQQQQGQQQQGQ. The segment covering 1249 to 1260 has biased composition (basic and acidic residues); sequence THSEGDGTERAK. ANK repeat units follow at residues 1273-1302, 1306-1335, 1340-1369, 1373-1402, 1408-1437, 1447-1476, 1480-1509, 1515-1546, 1548-1577, and 1581-1610; these read TLET…NIEH, KGFT…AIEA, TKDT…NKEH, SDYT…EINS, LGIS…DINA, YRNT…NVEH, TGLT…DPNA, TKDT…DIRN, KGCS…DTDM, and RKMS…QFPN. A coiled-coil region spans residues 1638-1696; sequence RNAKKAQAETAEETANRLLQLIDDEKERDINKKQKIKDKKKQKKEAKKKFQAEQEQLSA. The disordered stretch occupies residues 1669–1857; that stretch reads KKQKIKDKKK…SSISERQHSW (189 aa). Basic residues predominate over residues 1670–1686; the sequence is KQKIKDKKKQKKEAKKK. A compositionally biased stretch (pro residues) spans 1698–1708; the sequence is PSKPEPVVAPE. The span at 1709–1722 shows a compositional bias: acidic residues; it reads PEPEPETEPVEEPA. The span at 1811-1829 shows a compositional bias: basic and acidic residues; it reads DWQKAGKEGKKVRPKREGR. A compositionally biased stretch (polar residues) spans 1832 to 1851; sequence APSSAGSSQAKHRSNTSSIS. The KH domain maps to 1864 to 1929; sequence VKAYEFTVPG…DVVSMAVNII (66 aa). Disordered stretches follow at residues 1980-2182, 2196-2221, 2269-2292, 2301-2320, 2352-2417, 2444-2465, and 2539-2636; these read SASI…SLPS, FKPT…STAS, NSTA…SNDF, SNQK…NSQL, SQSS…TQQQ, MHRQ…NPYY, and GMMQ…SSRM. Residues 1994–2008 are compositionally biased toward polar residues; sequence SQCNRSSKSHGNQAT. A compositionally biased stretch (low complexity) spans 2025–2045; the sequence is TPPTQTQTKQQPTPSPQVQQP. Residues 2057–2083 show a composition bias toward polar residues; that stretch reads SLAQSSVPQATENVTKPTQTPPASVQQ. Low complexity-rich tracts occupy residues 2099–2119 and 2139–2148; these read QVVQ…QRPQ and QQHMQQIQQQ. The segment covering 2167–2179 has biased composition (pro residues); that stretch reads PGPPVQPQTPPQS. The segment covering 2269–2280 has biased composition (low complexity); that stretch reads NSTASSLNTATT. Residues 2281–2292 show a composition bias toward polar residues; that stretch reads KNDTSDWGSNDF. Composition is skewed to low complexity over residues 2361–2373 and 2391–2417; these read QHQQ…MQDP and PQQF…TQQQ. Polar residues-rich tracts occupy residues 2449-2465, 2565-2574, and 2583-2595; these read NSSS…NPYY, RSASGSSQNR, and QQPQ…TQAD. Over residues 2599–2615 the composition is skewed to low complexity; it reads RLLLQQQQQQRSSQQQQ. A compositionally biased stretch (polar residues) spans 2616–2636; sequence NPTNQGLPQKWSNTWNSSSRM.

It belongs to the mask family.

The protein resides in the cytoplasm. This is Ankyrin repeat and KH domain-containing protein CBG24701 from Caenorhabditis briggsae.